The primary structure comprises 312 residues: DNA-directed RNA polymerase subunit alpha (312 aa).

The tract at residues 1-226 (MIEFEKPIIT…EHLNLFTDLT (226 aa)) is alpha N-terminal domain (alpha-NTD). Residues 243-312 (DEKVLDRTIE…DLGLGLKNDK (70 aa)) form an alpha C-terminal domain (alpha-CTD) region.

Belongs to the RNA polymerase alpha chain family. As to quaternary structure, homodimer. The RNAP catalytic core consists of 2 alpha, 1 beta, 1 beta' and 1 omega subunit. When a sigma factor is associated with the core the holoenzyme is formed, which can initiate transcription.

The enzyme catalyses RNA(n) + a ribonucleoside 5'-triphosphate = RNA(n+1) + diphosphate. DNA-dependent RNA polymerase catalyzes the transcription of DNA into RNA using the four ribonucleoside triphosphates as substrates. This chain is DNA-directed RNA polymerase subunit alpha, found in Streptococcus pyogenes serotype M1.